We begin with the raw amino-acid sequence, 131 residues long: Insertion element IS1 protein InsB (131 aa).

It belongs to the transposase 27 family.

Absolutely required for transposition of IS1. This is Insertion element IS1 protein InsB (insB1) from Shigella flexneri.